The sequence spans 82 residues: Small ribosomal subunit protein bS18 (82 aa).

The disordered stretch occupies residues methionine 1 to cysteine 20.

Belongs to the bacterial ribosomal protein bS18 family. As to quaternary structure, part of the 30S ribosomal subunit. Forms a tight heterodimer with protein bS6.

Functionally, binds as a heterodimer with protein bS6 to the central domain of the 16S rRNA, where it helps stabilize the platform of the 30S subunit. The polypeptide is Small ribosomal subunit protein bS18 (Brucella anthropi (strain ATCC 49188 / DSM 6882 / CCUG 24695 / JCM 21032 / LMG 3331 / NBRC 15819 / NCTC 12168 / Alc 37) (Ochrobactrum anthropi)).